A 707-amino-acid chain; its full sequence is Translation initiation factor eIF2B subunit epsilon (707 aa).

Disordered stretches follow at residues 489-526 and 686-707; these read HDDI…SVKF and AEEE…DESD. The W2 domain occupies 516–693; sequence DNPIEPDSVK…KSAEEESDDS (178 aa). Residues 688–707 show a composition bias toward acidic residues; it reads EESDDSDDSDDDDDDSDESD.

The protein belongs to the eIF-2B gamma/epsilon subunits family. Component of the translation initiation factor 2B (eIF2B) complex which is a heterodecamer of two sets of five different subunits: alpha, beta, gamma, delta and epsilon. Subunits alpha, beta and delta comprise a regulatory subcomplex and subunits epsilon and gamma comprise a catalytic subcomplex. Within the complex, the hexameric regulatory complex resides at the center, with the two heterodimeric catalytic subcomplexes bound on opposite sides.

It is found in the cytoplasm. The protein localises to the cytosol. Acts as a component of the translation initiation factor 2B (eIF2B) complex, which catalyzes the exchange of GDP for GTP on eukaryotic initiation factor 2 (eIF2) gamma subunit. Its guanine nucleotide exchange factor activity is repressed when bound to eIF2 complex phosphorylated on the alpha subunit, thereby limiting the amount of methionyl-initiator methionine tRNA available to the ribosome and consequently global translation is repressed. The chain is Translation initiation factor eIF2B subunit epsilon (eif2b5) from Dictyostelium discoideum (Social amoeba).